A 350-amino-acid polypeptide reads, in one-letter code: Deoxyhypusine synthase-like protein (350 aa).

Belongs to the deoxyhypusine synthase family.

This chain is Deoxyhypusine synthase-like protein, found in Chlorobaculum parvum (strain DSM 263 / NCIMB 8327) (Chlorobium vibrioforme subsp. thiosulfatophilum).